The chain runs to 158 residues: Flagellar assembly factor FliW (158 aa).

This sequence belongs to the FliW family. As to quaternary structure, interacts with translational regulator CsrA and flagellin(s).

It localises to the cytoplasm. Acts as an anti-CsrA protein, binds CsrA and prevents it from repressing translation of its target genes, one of which is flagellin. Binds to flagellin and participates in the assembly of the flagellum. The protein is Flagellar assembly factor FliW of Syntrophus aciditrophicus (strain SB).